Here is a 314-residue protein sequence, read N- to C-terminus: DNA-directed RNA polymerase subunit alpha (314 aa).

An alpha N-terminal domain (alpha-NTD) region spans residues 1 to 228 (MIEIEKPKIE…EHLNIFVGLT (228 aa)). The interval 245-314 (KEKVMEMTIE…DLGLGLRDDD (70 aa)) is alpha C-terminal domain (alpha-CTD).

The protein belongs to the RNA polymerase alpha chain family. Homodimer. The RNAP catalytic core consists of 2 alpha, 1 beta, 1 beta' and 1 omega subunit. When a sigma factor is associated with the core the holoenzyme is formed, which can initiate transcription.

It carries out the reaction RNA(n) + a ribonucleoside 5'-triphosphate = RNA(n+1) + diphosphate. Functionally, DNA-dependent RNA polymerase catalyzes the transcription of DNA into RNA using the four ribonucleoside triphosphates as substrates. This is DNA-directed RNA polymerase subunit alpha from Oceanobacillus iheyensis (strain DSM 14371 / CIP 107618 / JCM 11309 / KCTC 3954 / HTE831).